We begin with the raw amino-acid sequence, 407 residues long: Na(+)-translocating NADH-quinone reductase subunit F (407 aa).

Residues 6–26 (IFLAIGMFTAIVLGLVAIILV) form a helical membrane-spanning segment. Residues 35 to 127 (GDVTIQINGE…DMQIRVPEEV (93 aa)) form the 2Fe-2S ferredoxin-type domain. [2Fe-2S] cluster contacts are provided by cysteine 70, cysteine 76, cysteine 79, and cysteine 111. One can recognise an FAD-binding FR-type domain in the interval 130 to 269 (VKKWECTVES…YGPFGEFFAK (140 aa)).

The protein belongs to the NqrF family. In terms of assembly, composed of six subunits; NqrA, NqrB, NqrC, NqrD, NqrE and NqrF. The cofactor is [2Fe-2S] cluster. FAD serves as cofactor.

It localises to the cell inner membrane. It carries out the reaction a ubiquinone + n Na(+)(in) + NADH + H(+) = a ubiquinol + n Na(+)(out) + NAD(+). In terms of biological role, NQR complex catalyzes the reduction of ubiquinone-1 to ubiquinol by two successive reactions, coupled with the transport of Na(+) ions from the cytoplasm to the periplasm. The first step is catalyzed by NqrF, which accepts electrons from NADH and reduces ubiquinone-1 to ubisemiquinone by a one-electron transfer pathway. This chain is Na(+)-translocating NADH-quinone reductase subunit F, found in Pseudomonas paraeruginosa (strain DSM 24068 / PA7) (Pseudomonas aeruginosa (strain PA7)).